The sequence spans 201 residues: Peptidyl-prolyl cis-trans isomerase FKBP11 (201 aa).

The first 27 residues, 1–27, serve as a signal peptide directing secretion; it reads MTLSPLLLPLQLLLLLLFSGAVCRAEA. The PPIase FKBP-type domain occupies 57–144; it reads GDTLHIHYTG…QYDVELIALI (88 aa). Residues 156–176 traverse the membrane as a helical segment; that stretch reads ILPLVGIAMVPALLGLIGYHL.

This sequence belongs to the FKBP-type PPIase family. As to quaternary structure, interacts with IFITM5.

The protein localises to the membrane. It catalyses the reaction [protein]-peptidylproline (omega=180) = [protein]-peptidylproline (omega=0). In terms of biological role, PPIases accelerate the folding of proteins during protein synthesis. The chain is Peptidyl-prolyl cis-trans isomerase FKBP11 (Fkbp11) from Mus musculus (Mouse).